The chain runs to 437 residues: Trigger factor (437 aa).

A PPIase FKBP-type domain is found at 161–246; the sequence is DDQVNIDFVG…VNSVSAPVLP (86 aa).

Belongs to the FKBP-type PPIase family. Tig subfamily.

The protein resides in the cytoplasm. The enzyme catalyses [protein]-peptidylproline (omega=180) = [protein]-peptidylproline (omega=0). In terms of biological role, involved in protein export. Acts as a chaperone by maintaining the newly synthesized protein in an open conformation. Functions as a peptidyl-prolyl cis-trans isomerase. In Pseudomonas putida (strain ATCC 47054 / DSM 6125 / CFBP 8728 / NCIMB 11950 / KT2440), this protein is Trigger factor.